Here is a 209-residue protein sequence, read N- to C-terminus: Uracil phosphoribosyltransferase (209 aa).

5-phospho-alpha-D-ribose 1-diphosphate is bound by residues Arg79, Arg104, and 131–139; that span reads DPMLATGNS. Residues Ile194 and 199–201 contribute to the uracil site; that span reads GDA. Asp200 contacts 5-phospho-alpha-D-ribose 1-diphosphate.

The protein belongs to the UPRTase family. It depends on Mg(2+) as a cofactor.

The enzyme catalyses UMP + diphosphate = 5-phospho-alpha-D-ribose 1-diphosphate + uracil. Its pathway is pyrimidine metabolism; UMP biosynthesis via salvage pathway; UMP from uracil: step 1/1. Allosterically activated by GTP. In terms of biological role, catalyzes the conversion of uracil and 5-phospho-alpha-D-ribose 1-diphosphate (PRPP) to UMP and diphosphate. The chain is Uracil phosphoribosyltransferase from Agrobacterium fabrum (strain C58 / ATCC 33970) (Agrobacterium tumefaciens (strain C58)).